The sequence spans 494 residues: Glutamyl-tRNA(Gln) amidotransferase subunit A (494 aa).

Catalysis depends on charge relay system residues K81 and S156. S180 acts as the Acyl-ester intermediate in catalysis.

It belongs to the amidase family. GatA subfamily. As to quaternary structure, heterotrimer of A, B and C subunits.

It catalyses the reaction L-glutamyl-tRNA(Gln) + L-glutamine + ATP + H2O = L-glutaminyl-tRNA(Gln) + L-glutamate + ADP + phosphate + H(+). Functionally, allows the formation of correctly charged Gln-tRNA(Gln) through the transamidation of misacylated Glu-tRNA(Gln) in organisms which lack glutaminyl-tRNA synthetase. The reaction takes place in the presence of glutamine and ATP through an activated gamma-phospho-Glu-tRNA(Gln). This Mycobacterium bovis (strain ATCC BAA-935 / AF2122/97) protein is Glutamyl-tRNA(Gln) amidotransferase subunit A.